Consider the following 231-residue polypeptide: RING finger protein 141 (231 aa).

A lipid anchor (N-myristoyl glycine) is attached at G2. Residues 156-193 (CCICMDGRADLILPCAHSFCQKCIDKWSDRHRNCPICR) form an RING-type zinc finger.

It is found in the membrane. Functionally, may be involved in spermatogenesis. In Canis lupus familiaris (Dog), this protein is RING finger protein 141 (RNF141).